We begin with the raw amino-acid sequence, 313 residues long: Proline iminopeptidase (313 aa).

The 264-residue stretch at 35 to 298 (KPVVMLHGGP…SPASGHSAFE (264 aa)) folds into the AB hydrolase-1 domain. Catalysis depends on Ser110, which acts as the Nucleophile. Asp266 is an active-site residue. Catalysis depends on His294, which acts as the Proton donor.

The protein belongs to the peptidase S33 family. As to quaternary structure, homooligomer.

The protein localises to the cytoplasm. It catalyses the reaction Release of N-terminal proline from a peptide.. In terms of biological role, may be involved in proline metabolism and sensitivity to ascamycin. Has ascamycin dealanylating activity. This is Proline iminopeptidase (pip) from Xanthomonas citri (Xanthomonas campestris pv. citri).